The following is a 229-amino-acid chain: Cytidylate kinase (229 aa).

ATP is bound at residue 12-20; the sequence is GPSGSGKGT.

It belongs to the cytidylate kinase family. Type 1 subfamily.

Its subcellular location is the cytoplasm. The catalysed reaction is CMP + ATP = CDP + ADP. It carries out the reaction dCMP + ATP = dCDP + ADP. The chain is Cytidylate kinase from Stutzerimonas stutzeri (strain A1501) (Pseudomonas stutzeri).